The primary structure comprises 188 residues: GMP synthase [glutamine-hydrolyzing] subunit A (188 aa).

Residues 2 to 188 form the Glutamine amidotransferase type-1 domain; sequence KIYIIDNGGQ…FKNFIEKCRR (187 aa). Cys-79 serves as the catalytic Nucleophile. Catalysis depends on residues His-166 and Glu-168.

Heterodimer composed of a glutamine amidotransferase subunit (A) and a GMP-binding subunit (B).

It catalyses the reaction XMP + L-glutamine + ATP + H2O = GMP + L-glutamate + AMP + diphosphate + 2 H(+). Its pathway is purine metabolism; GMP biosynthesis; GMP from XMP (L-Gln route): step 1/1. Its function is as follows. Catalyzes the synthesis of GMP from XMP. The protein is GMP synthase [glutamine-hydrolyzing] subunit A of Picrophilus torridus (strain ATCC 700027 / DSM 9790 / JCM 10055 / NBRC 100828 / KAW 2/3).